A 109-amino-acid chain; its full sequence is ATP synthase subunit c (109 aa).

The next 2 membrane-spanning stretches (helical) occupy residues Tyr42–Ser62 and Leu88–Val108.

It belongs to the ATPase C chain family. As to quaternary structure, F-type ATPases have 2 components, F(1) - the catalytic core - and F(0) - the membrane proton channel. F(1) has five subunits: alpha(3), beta(3), gamma(1), delta(1), epsilon(1). F(0) has three main subunits: a(1), b(2) and c(10-14). The alpha and beta chains form an alternating ring which encloses part of the gamma chain. F(1) is attached to F(0) by a central stalk formed by the gamma and epsilon chains, while a peripheral stalk is formed by the delta and b chains.

The protein resides in the cell membrane. Functionally, f(1)F(0) ATP synthase produces ATP from ADP in the presence of a proton or sodium gradient. F-type ATPases consist of two structural domains, F(1) containing the extramembraneous catalytic core and F(0) containing the membrane proton channel, linked together by a central stalk and a peripheral stalk. During catalysis, ATP synthesis in the catalytic domain of F(1) is coupled via a rotary mechanism of the central stalk subunits to proton translocation. Key component of the F(0) channel; it plays a direct role in translocation across the membrane. A homomeric c-ring of between 10-14 subunits forms the central stalk rotor element with the F(1) delta and epsilon subunits. This is ATP synthase subunit c from Ureaplasma urealyticum serovar 10 (strain ATCC 33699 / Western).